The primary structure comprises 351 residues: Putative [LysW]-L-2-aminoadipate/[LysW]-L-glutamate phosphate reductase (351 aa).

Residues 9–12 (SGFV) and 33–35 (SRR) contribute to the NADP(+) site. Cys150 is a catalytic residue. Residue Asn318 coordinates NADP(+).

The protein belongs to the NAGSA dehydrogenase family. Type 1 subfamily. LysY sub-subfamily.

The protein localises to the cytoplasm. The catalysed reaction is [amino-group carrier protein]-C-terminal-N-(1-carboxy-5-oxopentan-1-yl)-L-glutamine + phosphate + NADP(+) = [amino-group carrier protein]-C-terminal-N-(1-carboxy-5-phosphooxy-5-oxopentan-1-yl)-L-glutamine + NADPH + H(+). It catalyses the reaction [amino-group carrier protein]-C-terminal-gamma-(L-glutamyl-5-semialdehyde)-L-glutamate + phosphate + NADP(+) = [amino-group carrier protein]-C-terminal-gamma-(5-phospho-L-glutamyl)-L-glutamate + NADPH + H(+). Its pathway is amino-acid biosynthesis; L-lysine biosynthesis via AAA pathway; L-lysine from L-alpha-aminoadipate (Thermus route): step 3/5. The protein operates within amino-acid biosynthesis; L-arginine biosynthesis. Its function is as follows. Involved in both the arginine and lysine biosynthetic pathways. The chain is Putative [LysW]-L-2-aminoadipate/[LysW]-L-glutamate phosphate reductase from Pyrobaculum aerophilum (strain ATCC 51768 / DSM 7523 / JCM 9630 / CIP 104966 / NBRC 100827 / IM2).